Consider the following 511-residue polypeptide: MVVGILIGIIILGVVGFIQYTLIQKASKNRVESLEKEASLTLEEAKREAESTKKEAILEAKEEVHKLRADLDKETRDRRNEIQRFERRLIQREESLDKKGEMLEKREDSINKKSIEIQELEERVQNLYGEQRAELERISNLSSEDARTLLLDEVRREIKHESAMLIKELETKAKEEADKKSREIITTAIQRCAADHVSETTVHVVALPNDEMKGRIIGREGRNIRTLETLTGVDLIIDDTPEAVILSSFDPIRREVARIALEKLIVDGRIHPARIEEMVERAIKDVENDIKEEGEQATFETGVHGLHPEIIKLLGRLKYRTSYGQNVLKHSIEVSYLAGLMASELGLDVNLARRAGLLHDIGKGVDQEYEGPHAVIGGELAKKYHESPAVVNAIAAHHGDTEMQTLEAVLVQAADAISAARPGARRETLEAYIKRLEKLEEIATSYEGVEKSYAIQAGREIRIMVKPDQVDDAGAIEMARNIVKKIEEQLEYPGQIKINVIRETRAVDYAK.

A helical membrane pass occupies residues 3–23 (VGILIGIIILGVVGFIQYTLI). The 86-residue stretch at 201-286 (TVHVVALPND…EMVERAIKDV (86 aa)) folds into the KH domain. One can recognise an HD domain in the interval 327–420 (VLKHSIEVSY…VQAADAISAA (94 aa)).

It belongs to the RNase Y family.

Its subcellular location is the cell membrane. Endoribonuclease that initiates mRNA decay. In Clostridium perfringens (strain ATCC 13124 / DSM 756 / JCM 1290 / NCIMB 6125 / NCTC 8237 / Type A), this protein is Ribonuclease Y.